A 461-amino-acid chain; its full sequence is Ornithine decarboxylase (461 aa).

K69 bears the N6-(pyridoxal phosphate)lysine mark. Residues S200, G237, and 274–277 contribute to the pyridoxal 5'-phosphate site; that span reads EPGR. S303 bears the Phosphoserine; by CK2 mark. Substrate is bound at residue 331–332; that stretch reads YD. C360 acts as the Proton donor; shared with dimeric partner in catalysis. Position 360 is an S-nitrosocysteine (C360). Residue D361 coordinates substrate. Y389 is a pyridoxal 5'-phosphate binding site.

The protein belongs to the Orn/Lys/Arg decarboxylase class-II family. In terms of assembly, homodimer. Only the dimer is catalytically active, as the active sites are constructed of residues from both monomers. It depends on pyridoxal 5'-phosphate as a cofactor.

The enzyme catalyses L-ornithine + H(+) = putrescine + CO2. Its pathway is amine and polyamine biosynthesis; putrescine biosynthesis via L-ornithine pathway; putrescine from L-ornithine: step 1/1. With respect to regulation, inhibited by antizymes (AZs) OAZ1, OAZ2 and OAZ3 in response to polyamine levels. AZs inhibit the assembly of the functional homodimer by binding to ODC monomers. Additionally, OAZ1 targets ODC monomers for ubiquitin-independent proteolytic destruction by the 26S proteasome. In terms of biological role, catalyzes the first and rate-limiting step of polyamine biosynthesis that converts ornithine into putrescine, which is the precursor for the polyamines, spermidine and spermine. Polyamines are essential for cell proliferation and are implicated in cellular processes, ranging from DNA replication to apoptosis. The polypeptide is Ornithine decarboxylase (Odc1) (Rattus norvegicus (Rat)).